The chain runs to 166 residues: Phospholipase A2 inhibitor clone 11 (166 aa).

The N-terminal stretch at 1 to 19 is a signal peptide; the sequence is MRLILLSGLLLLGIFLANG. The C-type lectin domain maps to 46-161; that stretch reads LKGSFLIVHK…CDDNLLVVCE (116 aa). Cystine bridges form between cysteine 83/cysteine 160 and cysteine 138/cysteine 152. N-linked (GlcNAc...) asparagine glycosylation occurs at asparagine 122.

The protein belongs to the alpha-type phospholipase A2 inhibitor family. As to quaternary structure, homotrimer; non-covalently linked. In terms of tissue distribution, expressed by the liver.

It localises to the secreted. In terms of biological role, this phospholipase A2 inhibitor binds directly phospholipase A2 in the presence or absence of calcium. In Bothrops neuwiedi (Neuwied's lancehead), this protein is Phospholipase A2 inhibitor clone 11.